The sequence spans 309 residues: Small ribosomal subunit biogenesis GTPase RsgA (309 aa).

The CP-type G domain occupies 88–247 (KNLITRPPVA…IADTPGFNKP (160 aa)). GTP-binding positions include 137–140 (TKRD) and 189–197 (GPSGVGKSS). Positions 272, 277, 279, and 285 each coordinate Zn(2+).

It belongs to the TRAFAC class YlqF/YawG GTPase family. RsgA subfamily. Monomer. Associates with 30S ribosomal subunit, binds 16S rRNA. It depends on Zn(2+) as a cofactor.

The protein resides in the cytoplasm. One of several proteins that assist in the late maturation steps of the functional core of the 30S ribosomal subunit. Helps release RbfA from mature subunits. May play a role in the assembly of ribosomal proteins into the subunit. Circularly permuted GTPase that catalyzes slow GTP hydrolysis, GTPase activity is stimulated by the 30S ribosomal subunit. The protein is Small ribosomal subunit biogenesis GTPase RsgA of Prochlorococcus marinus (strain SARG / CCMP1375 / SS120).